A 219-amino-acid polypeptide reads, in one-letter code: Adenylate kinase (219 aa).

10-15 (GAGKGT) serves as a coordination point for ATP. The tract at residues 30–59 (ATGDLFRANISQGTDLGKQARAYMDAGQLV) is NMP. AMP is bound by residues threonine 31, arginine 36, 57–59 (QLV), 85–88 (GFPR), and glutamine 92. An LID region spans residues 126–164 (GRRVCRNNSAHVFHLTYNPPKAEGVCDACGGELYQRDDD). ATP contacts are provided by residues arginine 127 and 137-138 (VF). Arginine 161 and arginine 172 together coordinate AMP. ATP is bound at residue glycine 200.

It belongs to the adenylate kinase family. In terms of assembly, monomer.

It localises to the cytoplasm. The catalysed reaction is AMP + ATP = 2 ADP. It participates in purine metabolism; AMP biosynthesis via salvage pathway; AMP from ADP: step 1/1. In terms of biological role, catalyzes the reversible transfer of the terminal phosphate group between ATP and AMP. Plays an important role in cellular energy homeostasis and in adenine nucleotide metabolism. The polypeptide is Adenylate kinase (Streptomyces griseus subsp. griseus (strain JCM 4626 / CBS 651.72 / NBRC 13350 / KCC S-0626 / ISP 5235)).